A 660-amino-acid chain; its full sequence is Bifunctional polymyxin resistance protein ArnA (660 aa).

Residues 1-304 (MKAIVFAYHD…EMGIVTDVRL (304 aa)) form a formyltransferase ArnAFT region. Histidine 104 functions as the Proton donor; for formyltransferase activity in the catalytic mechanism. (6R)-10-formyltetrahydrofolate contacts are provided by residues arginine 114 and 136 to 140 (VKRPD). The tract at residues 314–660 (RRTRVLILGV…RTTVQEGDGA (347 aa)) is dehydrogenase ArnADH. Residues aspartate 347 and 368–369 (DI) contribute to the NAD(+) site. Residues alanine 393, tyrosine 398, and 432–433 (TS) each bind UDP-alpha-D-glucuronate. Glutamate 434 (proton acceptor; for decarboxylase activity) is an active-site residue. UDP-alpha-D-glucuronate is bound by residues arginine 460, asparagine 492, 526-535 (KLMDGGAQKR), and tyrosine 613. Arginine 619 (proton donor; for decarboxylase activity) is an active-site residue.

This sequence in the N-terminal section; belongs to the Fmt family. UDP-L-Ara4N formyltransferase subfamily. The protein in the C-terminal section; belongs to the NAD(P)-dependent epimerase/dehydratase family. UDP-glucuronic acid decarboxylase subfamily. Homohexamer, formed by a dimer of trimers.

The catalysed reaction is UDP-alpha-D-glucuronate + NAD(+) = UDP-beta-L-threo-pentopyranos-4-ulose + CO2 + NADH. It catalyses the reaction UDP-4-amino-4-deoxy-beta-L-arabinose + (6R)-10-formyltetrahydrofolate = UDP-4-deoxy-4-formamido-beta-L-arabinose + (6S)-5,6,7,8-tetrahydrofolate + H(+). The protein operates within nucleotide-sugar biosynthesis; UDP-4-deoxy-4-formamido-beta-L-arabinose biosynthesis; UDP-4-deoxy-4-formamido-beta-L-arabinose from UDP-alpha-D-glucuronate: step 1/3. It functions in the pathway nucleotide-sugar biosynthesis; UDP-4-deoxy-4-formamido-beta-L-arabinose biosynthesis; UDP-4-deoxy-4-formamido-beta-L-arabinose from UDP-alpha-D-glucuronate: step 3/3. It participates in bacterial outer membrane biogenesis; lipopolysaccharide biosynthesis. Bifunctional enzyme that catalyzes the oxidative decarboxylation of UDP-glucuronic acid (UDP-GlcUA) to UDP-4-keto-arabinose (UDP-Ara4O) and the addition of a formyl group to UDP-4-amino-4-deoxy-L-arabinose (UDP-L-Ara4N) to form UDP-L-4-formamido-arabinose (UDP-L-Ara4FN). The modified arabinose is attached to lipid A and is required for resistance to polymyxin and cationic antimicrobial peptides. This is Bifunctional polymyxin resistance protein ArnA from Serratia proteamaculans (strain 568).